The following is a 289-amino-acid chain: MENSSIVKSPNPTIEEQRNEIEKLKNLTGIEEVHVDGAKVNKRKRTFDEQSEITKDYIEYDFSKIEDTKGGYLLEEKKVEDLREKPAERELREQEERQKKLRLAPLNLDPETAPKCFECDSIELDTKYFDIFHCRVCHTCREKYPDKYSLLTKTECKLDYLLTEPELQDQELLPRLLKANPHQQGWSNMMLYLRYQVEEFAKKKWGSMEALDAEFERREVQKKEMKEKKFEKQLLELRKRTRTSNYSRMSIREKRKHVHSYDEEFEKPNEPGVIVQRCKCGLEIEQLEI.

Residues C116, C119, C137, and C140 each coordinate Zn(2+). A zinc finger spans residues 116–140 (CFECDSIELDTKYFDIFHCRVCHTC).

It belongs to the XPA family. As to quaternary structure, interacts with hrq1.

The protein localises to the nucleus. Functionally, involved in nucleotide excision repair (NER). Functional in repair of ultraviolet radiation induced damages and in mitotic mutation avoidance. Binds damaged DNA. Binds specifically to base-base mismatches or small insertion/deletion loops with unpaired nucleotides. Maintains GT repeat stability. Functions as a part of the short-patch excision repair system. The chain is DNA repair protein rad14 from Schizosaccharomyces pombe (strain 972 / ATCC 24843) (Fission yeast).